Consider the following 271-residue polypeptide: L-aspartate dehydrogenase (271 aa).

2 residues coordinate NAD(+): Ala-124 and Asn-192. His-222 is an active-site residue.

The protein belongs to the L-aspartate dehydrogenase family.

The enzyme catalyses L-aspartate + NADP(+) + H2O = oxaloacetate + NH4(+) + NADPH + H(+). The catalysed reaction is L-aspartate + NAD(+) + H2O = oxaloacetate + NH4(+) + NADH + H(+). The protein operates within cofactor biosynthesis; NAD(+) biosynthesis; iminoaspartate from L-aspartate (dehydrogenase route): step 1/1. Specifically catalyzes the NAD or NADP-dependent dehydrogenation of L-aspartate to iminoaspartate. In Methanosarcina acetivorans (strain ATCC 35395 / DSM 2834 / JCM 12185 / C2A), this protein is L-aspartate dehydrogenase.